Here is a 350-residue protein sequence, read N- to C-terminus: C-X-C chemokine receptor type 1 (350 aa).

Residues 1 to 39 (MSNITDPQMWDFDDLNFTGMPPTDEGYSPCRLETETLNK) are Extracellular-facing. N-linked (GlcNAc...) asparagine glycans are attached at residues Asn-3 and Asn-16. The helical transmembrane segment at 40–66 (YVVIITYALVFLLSLLGNSLVMLVILY) threads the bilayer. The Cytoplasmic segment spans residues 67-75 (SRVGRSVTD). Residues 76–96 (VYLLNLALADLLFALTLPIWA) form a helical membrane-spanning segment. The Extracellular segment spans residues 97-111 (ASKVNGWIFGTFLCK). Cysteines 110 and 187 form a disulfide. Residues 112-133 (VVSLLKEVNFYSGILLLACISV) form a helical membrane-spanning segment. Residues 134–154 (DRYLAIVHATRTLTQKRHLVK) are Cytoplasmic-facing. A helical membrane pass occupies residues 155–174 (FVCLGCWGLSMNLSLPFFLF). Residues 175–199 (RQAYHPNNSSPVCYEVLGNDTAKWR) lie on the Extracellular side of the membrane. Residues 200–220 (MVLRILPHTFGFIVPLFVMLF) traverse the membrane as a helical segment. At 221–242 (CYGFTLRTLFKAHMGQKHRAMR) the chain is on the cytoplasmic side. The helical transmembrane segment at 243–264 (VIFAVVLIFLLCWLPYNLVLLA) threads the bilayer. Over 265 to 285 (DTLMRTQVIQESCERRNNIGR) the chain is Extracellular. Residues 286–308 (ALDATEILGFLHSCLNPIIYAFI) traverse the membrane as a helical segment. At 309–350 (GQNFRHGFLKILAMHGLVSKEFLARHRVTSYTSSSVNVSSNL) the chain is on the cytoplasmic side.

The protein belongs to the G-protein coupled receptor 1 family. In terms of assembly, interacts with IL8. Interacts with GNAI2.

It is found in the cell membrane. Functionally, receptor to interleukin-8, which is a powerful neutrophils chemotactic factor. Binding of IL-8 to the receptor causes activation of neutrophils. This response is mediated via a G-protein that activates a phosphatidylinositol-calcium second messenger system. The polypeptide is C-X-C chemokine receptor type 1 (CXCR1) (Pan troglodytes (Chimpanzee)).